Consider the following 432-residue polypeptide: Putative D-alanyl-D-alanine carboxypeptidase (432 aa).

The chain crosses the membrane as a helical; Signal-anchor span at residues Ala7 to Leu25.

This sequence belongs to the peptidase S12 family. YfeW subfamily.

It localises to the cell inner membrane. It carries out the reaction Preferential cleavage: (Ac)2-L-Lys-D-Ala-|-D-Ala. Also transpeptidation of peptidyl-alanyl moieties that are N-acyl substituents of D-alanine.. The chain is Putative D-alanyl-D-alanine carboxypeptidase from Salmonella agona (strain SL483).